We begin with the raw amino-acid sequence, 601 residues long: MEGSDFLLAGVLFLFAAVAAVPLASRLGIGAVLGYLLAGIAIGPWGLGFISDVDEILHFSELGVVFLMFIIGLELNPSKLWQLRRSIFGVGAAQVLLSAALLAGLLMLTHFSWQAAVVGGIGLAMSSTAMALQLMREKGMNRSESGQLGFSVLLFQDLAVIPALALVPLLAGSADEHFDWMKIGMKVLAFVGMLIGGRYLLRPVFRFIAASGVREVFTAATLLLVLGSALFMDALGLSMALGTFIAGVLLAESEYRHELETAIDPFKGLLLGLFFISVGMSLNLGVLYTHLLWVVISVVVLVAVKILVLYLLARLYGVRSSERMQFAGVLSQGGEFAFVLFSTASSQRLFQGDQMALLLVTVTLSMMTTPLLMKLVDKWLSRQFNGPEEEDEKPWVNDDKPQVIVVGFGRFGQVIGRLLMANKMRITVLERDISAVNLMRKYGYKVYYGDATQVDLLRSAGAEAAESIVITCNEPEDTMKLVEICQQHFPHLHILARARGRVEAHELLQAGVTQFSRETFSSALELGRKTLVTLGMHPHQAQRAQLHFRRLDMRMLRELIPMHADTVQISRAREARRELEEIFQREMQQERRQLDGWDEFE.

The next 13 membrane-spanning stretches (helical) occupy residues 4-24 (SDFLLAGVLFLFAAVAAVPLA), 29-49 (IGAVLGYLLAGIAIGPWGLGF), 55-75 (EILHFSELGVVFLMFIIGLEL), 87-107 (IFGVGAAQVLLSAALLAGLLM), 115-135 (AAVVGGIGLAMSSTAMALQLM), 152-172 (VLLFQDLAVIPALALVPLLAG), 177-197 (HFDWMKIGMKVLAFVGMLIGG), 207-227 (FIAASGVREVFTAATLLLVLG), 230-250 (LFMDALGLSMALGTFIAGVLL), 268-288 (GLLLGLFFISVGMSLNLGVLY), 291-311 (LLWVVISVVVLVAVKILVLYL), 324-344 (MQFAGVLSQGGEFAFVLFSTA), and 356-376 (ALLLVTVTLSMMTTPLLMKLV). An RCK N-terminal domain is found at 400-519 (KPQVIVVGFG…AGVTQFSRET (120 aa)).

This sequence belongs to the monovalent cation:proton antiporter 2 (CPA2) transporter (TC 2.A.37) family. KefB subfamily. In terms of assembly, interacts with the regulatory subunit KefG.

Its subcellular location is the cell inner membrane. In terms of biological role, pore-forming subunit of a potassium efflux system that confers protection against electrophiles. Catalyzes K(+)/H(+) antiport. The polypeptide is Glutathione-regulated potassium-efflux system protein KefB (Escherichia coli O1:K1 / APEC).